Consider the following 374-residue polypeptide: Pectate lyase 1 (374 aa).

An N-terminal signal peptide occupies residues 1–22 (MKYLLPSAAAGLLLLAAQPTMA). Cysteine 93 and cysteine 176 are disulfide-bonded. Residues aspartate 150, aspartate 152, glutamate 187, and aspartate 191 each contribute to the Ca(2+) site. Arginine 239 is an active-site residue. An intrachain disulfide couples cysteine 350 to cysteine 373.

The protein belongs to the polysaccharide lyase 1 family. PLADES subfamily. It depends on Ca(2+) as a cofactor.

The protein localises to the secreted. It catalyses the reaction Eliminative cleavage of (1-&gt;4)-alpha-D-galacturonan to give oligosaccharides with 4-deoxy-alpha-D-galact-4-enuronosyl groups at their non-reducing ends.. It functions in the pathway glycan metabolism; pectin degradation; 2-dehydro-3-deoxy-D-gluconate from pectin: step 2/5. Functionally, involved in maceration and soft-rotting of plant tissue. This chain is Pectate lyase 1 (pel1), found in Pectobacterium atrosepticum (strain SCRI 1043 / ATCC BAA-672) (Erwinia carotovora subsp. atroseptica).